The primary structure comprises 2291 residues: Protein Ycf2 A (2291 aa).

An ATP-binding site is contributed by 1642–1649; the sequence is GSIGTGRS.

The protein belongs to the Ycf2 family.

The protein localises to the plastid. It is found in the chloroplast stroma. Probable ATPase of unknown function. Its presence in a non-photosynthetic plant (Epifagus virginiana) and experiments in tobacco indicate that it has an essential function which is probably not related to photosynthesis. In Atropa belladonna (Belladonna), this protein is Protein Ycf2 A (ycf2-A).